The sequence spans 1051 residues: Helicase POLQ-like (1051 aa).

The span at 1 to 10 (MANKHNLCKK) shows a compositional bias: basic residues. Disordered stretches follow at residues 1–28 (MANKHNLCKKRSLDLSEESTSESHAKRQ) and 61–112 (LFGT…APTD). Polar residues-rich tracts occupy residues 64-78 (TQATTSTNKMTQSGS) and 89-102 (SFPSAQSVPPNSAS). A compositionally biased stretch (basic and acidic residues) spans 103–112 (KPDEASAPTD). One can recognise a Helicase ATP-binding domain in the interval 274–446 (LPAIRQRKNL…FLNADVYTRG (173 aa)). Residue 287–294 (LPTSGGKT) coordinates ATP. The DEAH box motif lies at 391–394 (DELH). One can recognise a Helicase C-terminal domain in the interval 497 to 689 (HLAGLISECA…NEAVGLQSLI (193 aa)).

This sequence belongs to the helicase family. SKI2 subfamily.

Its subcellular location is the nucleus. The protein resides in the chromosome. The enzyme catalyses Couples ATP hydrolysis with the unwinding of duplex DNA by translocating in the 3'-5' direction.. It carries out the reaction ATP + H2O = ADP + phosphate + H(+). Its function is as follows. Single-stranded 3'-5' DNA helicase that plays a key role in homology-driven double-strand break (DSB) repair. Involved in different DSB repair mechanisms that are guided by annealing of extensive stretches of complementary bases at break ends, such as microhomology-mediated end-joining (MMEJ), single-strand annealing (SSA) or synthesis-dependent strand annealing (SDSA). This chain is Helicase POLQ-like, found in Drosophila melanogaster (Fruit fly).